The sequence spans 276 residues: Undecaprenyl-diphosphatase 2 (276 aa).

7 helical membrane passes run 3–23, 48–68, 92–112, 119–139, 196–216, 225–245, and 255–275; these read IWDI…EYAP, AANT…AFVF, LSIA…FLFE, LFSV…MLAA, ADFT…LSLI, DLLP…LFVV, and IKLV…FILF.

This sequence belongs to the UppP family.

The protein localises to the cell membrane. The enzyme catalyses di-trans,octa-cis-undecaprenyl diphosphate + H2O = di-trans,octa-cis-undecaprenyl phosphate + phosphate + H(+). Its function is as follows. Catalyzes the dephosphorylation of undecaprenyl diphosphate (UPP). Confers resistance to bacitracin. This chain is Undecaprenyl-diphosphatase 2, found in Bacillus licheniformis (strain ATCC 14580 / DSM 13 / JCM 2505 / CCUG 7422 / NBRC 12200 / NCIMB 9375 / NCTC 10341 / NRRL NRS-1264 / Gibson 46).